Consider the following 86-residue polypeptide: Large ribosomal subunit protein bL27 (86 aa).

Positions 1 to 26 are disordered; sequence MASKKAGGSTKNGRDSQSKRLGVKRF.

This sequence belongs to the bacterial ribosomal protein bL27 family.

The protein is Large ribosomal subunit protein bL27 of Bdellovibrio bacteriovorus (strain ATCC 15356 / DSM 50701 / NCIMB 9529 / HD100).